A 150-amino-acid chain; its full sequence is Peptidoglycan-associated lipoprotein (150 aa).

The N-terminal stretch at 1 to 19 (MKKLTKVLLVAGSVAVLAA) is a signal peptide. Residue C20 is the site of N-palmitoyl cysteine attachment. The S-diacylglycerol cysteine moiety is linked to residue C20. Residues 37-150 (SVQDLQQRYN…SKNRRAVLAY (114 aa)) enclose the OmpA-like domain.

The protein belongs to the Pal lipoprotein family. As to quaternary structure, the Tol-Pal system is composed of five core proteins: the inner membrane proteins TolA, TolQ and TolR, the periplasmic protein TolB and the outer membrane protein Pal. They form a network linking the inner and outer membranes and the peptidoglycan layer.

The protein resides in the cell outer membrane. Part of the Tol-Pal system, which plays a role in outer membrane invagination during cell division and is important for maintaining outer membrane integrity. This Pasteurella multocida (strain Pm70) protein is Peptidoglycan-associated lipoprotein.